The following is a 367-amino-acid chain: Peptide chain release factor 2 (367 aa).

The residue at position 250 (glutamine 250) is an N5-methylglutamine.

The protein belongs to the prokaryotic/mitochondrial release factor family. Post-translationally, methylated by PrmC. Methylation increases the termination efficiency of RF2.

The protein resides in the cytoplasm. Peptide chain release factor 2 directs the termination of translation in response to the peptide chain termination codons UGA and UAA. The sequence is that of Peptide chain release factor 2 from Kineococcus radiotolerans (strain ATCC BAA-149 / DSM 14245 / SRS30216).